Consider the following 760-residue polypeptide: NAD(P)H-quinone oxidoreductase subunit 5, chloroplastic (760 aa).

A run of 16 helical transmembrane segments spans residues 9 to 29 (WIISFVTLPVPMLIGMGLLLF), 39 to 59 (IWAFPSVLLLSIVMVFSIDLF), 89 to 109 (IDPLTSILLILITTVGILVLV), 125 to 145 (FVYMSFFNTSMLGLVTSSNLI), 147 to 167 (IYIFWELVGMCSYLLIGFWFT), 185 to 205 (GDFGLLLGILGLYWITGSFEF), 221 to 241 (NEVHFLFVTLCAFLLFSGAIA), 260 to 280 (TPISALIHAATMVAAGIFLVA), 282 to 302 (LLPLFVVIPYIMKLIALIGII), 329 to 349 (LGYTMLALGMGSYRAALFHLI), 356 to 376 (ALLFLGSGSIIHSMEVIVGYS), 398 to 418 (IAFLLGTLSLCGIPPLACFWS), 429 to 449 (YSPIFAIIAFSTAGLTAFYMF), 556 to 576 (ILFPMLVLVLFTLFIGAIGIP), 620 to 640 (FSVSIASFGIFIASSLYKPIY), and 734 to 754 (FYLLLYLFYVLIFLLISSSIF).

The protein belongs to the complex I subunit 5 family. NDH is composed of at least 16 different subunits, 5 of which are encoded in the nucleus.

The protein resides in the plastid. It is found in the chloroplast thylakoid membrane. It catalyses the reaction a plastoquinone + NADH + (n+1) H(+)(in) = a plastoquinol + NAD(+) + n H(+)(out). It carries out the reaction a plastoquinone + NADPH + (n+1) H(+)(in) = a plastoquinol + NADP(+) + n H(+)(out). NDH shuttles electrons from NAD(P)H:plastoquinone, via FMN and iron-sulfur (Fe-S) centers, to quinones in the photosynthetic chain and possibly in a chloroplast respiratory chain. The immediate electron acceptor for the enzyme in this species is believed to be plastoquinone. Couples the redox reaction to proton translocation, and thus conserves the redox energy in a proton gradient. The sequence is that of NAD(P)H-quinone oxidoreductase subunit 5, chloroplastic (ndhF) from Populus trichocarpa (Western balsam poplar).